The primary structure comprises 1157 residues: ATP-dependent helicase/deoxyribonuclease subunit B (1157 aa).

The UvrD-like helicase ATP-binding domain maps to 1–277; the sequence is MTLQIIAGKS…KLFLENKRAK (277 aa). 8–15 is a binding site for ATP; it reads GKSGTGKT. One can recognise a UvrD-like helicase C-terminal domain in the interval 272–578; it reads ENKRAKSDSL…EFSLLPPSLD (307 aa). Cys-794, Cys-1115, Cys-1118, and Cys-1124 together coordinate [4Fe-4S] cluster.

It belongs to the helicase family. AddB/RexB type 1 subfamily. As to quaternary structure, heterodimer of AddA and AddB. Mg(2+) is required as a cofactor. It depends on [4Fe-4S] cluster as a cofactor.

Functionally, the heterodimer acts as both an ATP-dependent DNA helicase and an ATP-dependent, dual-direction single-stranded exonuclease. Recognizes the chi site generating a DNA molecule suitable for the initiation of homologous recombination. The AddB subunit has 5' -&gt; 3' nuclease activity but not helicase activity. This Listeria welshimeri serovar 6b (strain ATCC 35897 / DSM 20650 / CCUG 15529 / CIP 8149 / NCTC 11857 / SLCC 5334 / V8) protein is ATP-dependent helicase/deoxyribonuclease subunit B.